The primary structure comprises 868 residues: Alanine--tRNA ligase (868 aa).

Zn(2+)-binding residues include His-555, His-559, Cys-657, and His-661. Residues 828-847 are disordered; the sequence is SQVGGKGGGRPDMAQAGGSE.

Belongs to the class-II aminoacyl-tRNA synthetase family. Zn(2+) is required as a cofactor.

It is found in the cytoplasm. It catalyses the reaction tRNA(Ala) + L-alanine + ATP = L-alanyl-tRNA(Ala) + AMP + diphosphate. Its function is as follows. Catalyzes the attachment of alanine to tRNA(Ala) in a two-step reaction: alanine is first activated by ATP to form Ala-AMP and then transferred to the acceptor end of tRNA(Ala). Also edits incorrectly charged Ser-tRNA(Ala) and Gly-tRNA(Ala) via its editing domain. The sequence is that of Alanine--tRNA ligase from Pseudoalteromonas translucida (strain TAC 125).